Consider the following 232-residue polypeptide: Small ribosomal subunit protein uS3 (232 aa).

Residues 39-107 (VRQFLTKELS…PAQINIAEVR (69 aa)) enclose the KH type-2 domain.

The protein belongs to the universal ribosomal protein uS3 family. As to quaternary structure, part of the 30S ribosomal subunit. Forms a tight complex with proteins S10 and S14.

Its function is as follows. Binds the lower part of the 30S subunit head. Binds mRNA in the 70S ribosome, positioning it for translation. The polypeptide is Small ribosomal subunit protein uS3 (Sodalis glossinidius (strain morsitans)).